Consider the following 166-residue polypeptide: Phospholipase A2 inhibitor clone 10 (166 aa).

The signal sequence occupies residues 1–19; that stretch reads MRLILLSSLLLLGIFLANG. The C-type lectin domain maps to 46 to 161; it reads LKYSFLTVHR…CDDNLLVVCE (116 aa). 2 disulfide bridges follow: cysteine 83-cysteine 160 and cysteine 138-cysteine 152. Asparagine 122 carries an N-linked (GlcNAc...) asparagine glycan.

This sequence belongs to the alpha-type phospholipase A2 inhibitor family. As to quaternary structure, homotrimer; non-covalently linked. In terms of tissue distribution, expressed by the liver.

Its subcellular location is the secreted. In terms of biological role, this phospholipase A2 inhibitor binds directly phospholipase A2 in the presence or absence of calcium. This is Phospholipase A2 inhibitor clone 10 from Bothrops moojeni (Lance-headed viper).